The following is a 170-amino-acid chain: Cytochrome P450 monooxygenase oryQ (170 aa).

Cys85 serves as a coordination point for heme.

The protein belongs to the cytochrome P450 family. Heme is required as a cofactor.

It functions in the pathway secondary metabolite biosynthesis. Functionally, cytochrome P450 monooxygenase; part of the gene cluster that mediates the biosynthesis of oryzines, natural products with an unusual maleidride backbone. The two subunits of the fungal fatty acid synthase oryfasA and oryfasB probably form octenoic acid. This fatty acid is most likely activated by the acyl-CoA ligase oryP to give octenyl-CoA before the citrate synthase-like protein oryE catalyzes condensation with oxaloacetate to form tricarboxylic acid. The next steps of the pathways are conjectural, but a favorite possible route has been proposed, beginning with decarboxylation and concomitant dehydration by the decarboxylase oryM, followed by tautomerization, which may lead to the production of a diene intermediate. Reduction of this diene intermediate could give the known metabolite piliformic acid. On the pathway to oryzine B and oryzine A, however, hydroxylation of the diene by the alpha-ketoglutarate-dependent dioxygenase oryG and lactonisation by the lactonohydrolases oryH or oryL could give oryzine B directly. Finally, enoyl reduction by the dehydrogenase oryD would then convert oryzine B into oryzine A. This chain is Cytochrome P450 monooxygenase oryQ, found in Aspergillus oryzae (strain ATCC 42149 / RIB 40) (Yellow koji mold).